We begin with the raw amino-acid sequence, 396 residues long: Lipopolysaccharide assembly protein B (396 aa).

The helical transmembrane segment at 1–20 threads the bilayer; sequence MIELLFLLLPIAAAYGWYMG. Topologically, residues 21–396 are cytoplasmic; that stretch reads RRSAKKDQDD…IKPVSNQEHN (376 aa). 4 TPR repeats span residues 35 to 68, 77 to 109, 149 to 182, and 221 to 254; these read LSRD…QEIE, FEAE…SPNY, ENAL…KPQE, and VRAS…NPDY. Residues cysteine 364, cysteine 367, cysteine 378, and cysteine 381 each coordinate Fe cation.

The protein belongs to the LapB family.

It is found in the cell inner membrane. Functionally, modulates cellular lipopolysaccharide (LPS) levels by regulating LpxC, which is involved in lipid A biosynthesis. May act by modulating the proteolytic activity of FtsH towards LpxC. May also coordinate assembly of proteins involved in LPS synthesis at the plasma membrane. This chain is Lipopolysaccharide assembly protein B, found in Haemophilus influenzae (strain ATCC 51907 / DSM 11121 / KW20 / Rd).